The sequence spans 373 residues: MDKGIIFLAAGGTGGHLFPAEALAHELKASGYAVHLVTDSRAERYAGKFPAEEVHVVPSATIGSKNPIKLAQSVWKLWTGLRAARRLIARYKPRAVVGFGGYPTVPPLLAATGMGVPSLIHEQNAVMGRANKMLASRVQAIAGGFLPEGTGAFAAKTVTTGNPVRPAVSEAARVPYAAPHGGPFHLVVFGGSQGAQFFSKAVPQAICRLDDAQRQRLKVTQQARPEDREGVTAAYDKLGIPAEVSPFFTDMAARIASAHLVICRSGASTVSEVSVIGRPAILVPYPYALDHDQAANAAALAAKGGARVIAQAELNAERLAGILSDAMNTPDALAQMAANARETGKPDAARLLASLVEAIASGSTVAKFKEARS.

Residues T13–G15, N124, R165, S192, and Q293 contribute to the UDP-N-acetyl-alpha-D-glucosamine site.

Belongs to the glycosyltransferase 28 family. MurG subfamily.

It localises to the cell inner membrane. The enzyme catalyses di-trans,octa-cis-undecaprenyl diphospho-N-acetyl-alpha-D-muramoyl-L-alanyl-D-glutamyl-meso-2,6-diaminopimeloyl-D-alanyl-D-alanine + UDP-N-acetyl-alpha-D-glucosamine = di-trans,octa-cis-undecaprenyl diphospho-[N-acetyl-alpha-D-glucosaminyl-(1-&gt;4)]-N-acetyl-alpha-D-muramoyl-L-alanyl-D-glutamyl-meso-2,6-diaminopimeloyl-D-alanyl-D-alanine + UDP + H(+). It participates in cell wall biogenesis; peptidoglycan biosynthesis. Its function is as follows. Cell wall formation. Catalyzes the transfer of a GlcNAc subunit on undecaprenyl-pyrophosphoryl-MurNAc-pentapeptide (lipid intermediate I) to form undecaprenyl-pyrophosphoryl-MurNAc-(pentapeptide)GlcNAc (lipid intermediate II). The polypeptide is UDP-N-acetylglucosamine--N-acetylmuramyl-(pentapeptide) pyrophosphoryl-undecaprenol N-acetylglucosamine transferase (Sinorhizobium fredii (strain NBRC 101917 / NGR234)).